The sequence spans 826 residues: Sister chromatid cohesion protein PDS5 homolog D (826 aa).

HEAT repeat units follow at residues 18–54 (GTNL…LSMQ), 55–94 (SALI…ITAP), 151–188 (DLIL…DETE), 189–226 (QVST…RCAR), and 230–267 (PYII…HSPV). Disordered stretches follow at residues 261-551 (PKVH…EVES) and 640-826 (KKSK…KRKS). Basic and acidic residues-rich tracts occupy residues 269–286 (TKEH…KENL) and 296–309 (RHET…EKVR). The Nuclear localization signal 1 motif lies at 281–288 (SRKENLSK). Positions 311–323 (GNKSSLLKQSLKQ) are enriched in polar residues. Positions 357–364 (GKRDPLKT) match the Nuclear localization signal 2 motif. Residues 396-408 (SPATSSRSLTGSL) show a composition bias toward polar residues. The HEAT 6 repeat unit spans residues 424 to 461 (SLSSPRLKKLASCFRDEEPNQEDDRKIGNSSKQTRSKN). The segment covering 437 to 450 (FRDEEPNQEDDRKI) has biased composition (basic and acidic residues). The span at 451–460 (GNSSKQTRSK) shows a compositional bias: polar residues. A compositionally biased stretch (low complexity) spans 644-663 (NVAVSVEPTSSSGVRSSSRT). A compositionally biased stretch (basic and acidic residues) spans 665–701 (MKKDCGKRLNKQVEKTREGKNLRSLKELNAETDRTAE). The span at 702 to 724 (EQEVSLEAESDDRSEEQEYEDDC) shows a compositional bias: acidic residues. A compositionally biased stretch (basic and acidic residues) spans 725 to 746 (SDKKEQSQDKGVEAETKEEEKQ). Acidic residues-rich tracts occupy residues 752–763 (GESEGEDSESEE), 771–800 (DDME…EVDD), and 811–826 (EKEE…KRKS). A coiled-coil region spans residues 770-825 (TDDMEDDEEEEEEEIDHMEDEAEEEKEEVDDKEASANMSEIEKEEEEEEEDEEKRK).

It belongs to the PDS5 family. As to quaternary structure, interacts with the cohesin complex.

It localises to the nucleus. In terms of biological role, cohesin cofactor dispensable during the meiotic division but playing an important role in DNA repair by homologous recombination (HR) probably by helping SMC5/SMC6 complex. Regulator of sister chromatid cohesion in mitosis which may stabilize cohesin complex association with chromatin. May couple sister chromatid cohesion during mitosis to DNA replication. Cohesion ensures that chromosome partitioning is accurate in both meiotic and mitotic cells and plays an important role in DNA repair. In Arabidopsis thaliana (Mouse-ear cress), this protein is Sister chromatid cohesion protein PDS5 homolog D.